A 175-amino-acid polypeptide reads, in one-letter code: Transcriptional repressor NrdR (175 aa).

Residues 3–32 (CPYCSHPDTKVIDSRDVDDGVRRRRECVVC) fold into a zinc finger. Residues 47–137 (LFVVKKDQRR…VYREFTDITQ (91 aa)) enclose the ATP-cone domain.

It belongs to the NrdR family. Zn(2+) is required as a cofactor.

Functionally, negatively regulates transcription of bacterial ribonucleotide reductase nrd genes and operons by binding to NrdR-boxes. The polypeptide is Transcriptional repressor NrdR (Dehalococcoides mccartyi (strain ATCC BAA-2266 / KCTC 15142 / 195) (Dehalococcoides ethenogenes (strain 195))).